A 328-amino-acid chain; its full sequence is WUSCHEL-related homeobox 6 (328 aa).

The span at 1–11 (MEGSSNSPDRQ) shows a compositional bias: polar residues. Residues 1–45 (MEGSSNSPDRQSSGGSPPEERGGGGSGGGGGRSAAGEPVRSRWTP) form a disordered region. Gly residues predominate over residues 23 to 33 (GGGSGGGGGRS). Positions 38-102 (PVRSRWTPKP…NRRSRSRRRQ (65 aa)) form a DNA-binding region, homeobox; WUS-type.

The protein belongs to the WUS homeobox family.

It is found in the nucleus. Transcription factor which may be involved in developmental processes. The sequence is that of WUSCHEL-related homeobox 6 (WOX6) from Oryza sativa subsp. indica (Rice).